The chain runs to 116 residues: Large ribosomal subunit protein bL20 (116 aa).

This sequence belongs to the bacterial ribosomal protein bL20 family.

Binds directly to 23S ribosomal RNA and is necessary for the in vitro assembly process of the 50S ribosomal subunit. It is not involved in the protein synthesizing functions of that subunit. The protein is Large ribosomal subunit protein bL20 of Helicobacter acinonychis (strain Sheeba).